The sequence spans 242 residues: Small ribosomal subunit protein uS7m (242 aa).

The transit peptide at 1 to 37 (MAAPALRAPLRWSGLALGVRCAVWNLPGLTQVRGSRY) directs the protein to the mitochondrion. K228 carries the post-translational modification N6-acetyllysine.

This sequence belongs to the universal ribosomal protein uS7 family. As to quaternary structure, component of the mitochondrial ribosome small subunit (28S) which comprises a 12S rRNA and about 30 distinct proteins.

Its subcellular location is the mitochondrion. This is Small ribosomal subunit protein uS7m (Mrps7) from Mus musculus (Mouse).